The sequence spans 5263 residues: Fibroin heavy chain (5263 aa).

The signal sequence occupies residues 1 to 21 (MRVKTFVILCCALQYVAYTNA). Residues 149–5206 (AAVGAGAGAG…GSGAGAGGSV (5058 aa)) form a highly repetitive region. Cysteines 5260 and 5263 form a disulfide.

As to quaternary structure, silk fibroin elementary unit consists in a disulfide-linked heavy and light chain and a p25 glycoprotein in molar ratios of 6:6:1. This results in a complex of approximately 2.3 MDa. In terms of processing, the interchain disulfide bridge is essential for the intracellular transport and secretion of fibroin. In terms of tissue distribution, produced exclusively in the posterior (PSG) section of silk glands, which are essentially modified salivary glands.

In terms of biological role, core component of the silk filament; a strong, insoluble and chemically inert fiber. This is Fibroin heavy chain (FIBH) from Bombyx mori (Silk moth).